We begin with the raw amino-acid sequence, 215 residues long: Cytochrome b6 (215 aa).

The helical transmembrane segment at 32–52 threads the bilayer; the sequence is IFYCLGGITLTCFIVQVATGF. Residue Cys35 participates in heme c binding. 2 residues coordinate heme b: His86 and His100. 3 helical membrane-spanning segments follow: residues 90 to 110, 116 to 136, and 186 to 206; these read ASMMVLMMILHVFRVYLTGGF, LTWITGVVLAVLTVSFGVTGY, and LHTFVLPLLTAVFMLMHFLMI. Heme b-binding residues include His187 and His202.

The protein belongs to the cytochrome b family. PetB subfamily. The 4 large subunits of the cytochrome b6-f complex are cytochrome b6, subunit IV (17 kDa polypeptide, PetD), cytochrome f and the Rieske protein, while the 4 small subunits are PetG, PetL, PetM and PetN. The complex functions as a dimer. The cofactor is heme b. Heme c is required as a cofactor.

The protein resides in the plastid. It is found in the chloroplast thylakoid membrane. Component of the cytochrome b6-f complex, which mediates electron transfer between photosystem II (PSII) and photosystem I (PSI), cyclic electron flow around PSI, and state transitions. The chain is Cytochrome b6 from Chara vulgaris (Common stonewort).